The sequence spans 226 residues: Glycerol-3-phosphate acyltransferase (226 aa).

6 helical membrane-spanning segments follow: residues 1–21 (MGFW…LGSF), 60–80 (FVLG…YYLF), 102–122 (LVTL…FLGF), 134–154 (ILLA…AVVV), 159–178 (IVSL…MVFL), and 182–197 (LPYI…YVIL).

It belongs to the PlsY family. As to quaternary structure, probably interacts with PlsX.

The protein localises to the cell inner membrane. The enzyme catalyses an acyl phosphate + sn-glycerol 3-phosphate = a 1-acyl-sn-glycero-3-phosphate + phosphate. It functions in the pathway lipid metabolism; phospholipid metabolism. Its function is as follows. Catalyzes the transfer of an acyl group from acyl-phosphate (acyl-PO(4)) to glycerol-3-phosphate (G3P) to form lysophosphatidic acid (LPA). This enzyme utilizes acyl-phosphate as fatty acyl donor, but not acyl-CoA or acyl-ACP. The chain is Glycerol-3-phosphate acyltransferase from Nostoc sp. (strain PCC 7120 / SAG 25.82 / UTEX 2576).